A 155-amino-acid chain; its full sequence is Perlucin (155 aa).

3 disulfide bridges follow: Cys2/Cys13, Cys30/Cys127, and Cys102/Cys119. The 120-residue stretch at 9 to 128 (NRRSCYWFST…CQKPSHFICE (120 aa)) folds into the C-type lectin domain. Asn84 carries N-linked (GlcNAc...) asparagine glycosylation. Repeat copies occupy residues 136 to 145 (NSLHANLQQR) and 146 to 155 (DSLHANLQQR).

Glycosylated.

In terms of biological role, may promote nucleation and/or growth of calcium carbonate crystals. Binds to D-galactose and D-mannose/D-glucose. The polypeptide is Perlucin (Haliotis laevigata (Smooth Australian abalone)).